The sequence spans 295 residues: 3-hydroxy-5-phosphonooxypentane-2,4-dione thiolase (295 aa).

K203 serves as the catalytic Schiff-base intermediate with substrate.

It belongs to the DeoC/FbaB aldolase family. As to quaternary structure, homodecamer.

The protein localises to the cytoplasm. It catalyses the reaction dihydroxyacetone phosphate + acetyl-CoA = 3-hydroxy-2,4-dioxopentyl phosphate + CoA. Involved in the degradation of phospho-AI-2, thereby terminating induction of the lsr operon and closing the AI-2 signaling cycle. Catalyzes the transfer of an acetyl moiety from 3-hydroxy-5-phosphonooxypentane-2,4-dione to CoA to form glycerone phosphate and acetyl-CoA. The chain is 3-hydroxy-5-phosphonooxypentane-2,4-dione thiolase from Klebsiella pneumoniae subsp. pneumoniae (strain ATCC 700721 / MGH 78578).